Reading from the N-terminus, the 303-residue chain is Tyrosine recombinase XerC (303 aa).

Residues 1 to 85 (MRADLDAFLE…ATRGLYQYLL (85 aa)) form the Core-binding (CB) domain. A Tyr recombinase domain is found at 106–285 (KLPRTLDADR…DFQHLASVYD (180 aa)). Residues arginine 146, lysine 170, histidine 237, arginine 240, and histidine 263 contribute to the active site. The active-site O-(3'-phospho-DNA)-tyrosine intermediate is tyrosine 272.

Belongs to the 'phage' integrase family. XerC subfamily. As to quaternary structure, forms a cyclic heterotetrameric complex composed of two molecules of XerC and two molecules of XerD.

The protein resides in the cytoplasm. Functionally, site-specific tyrosine recombinase, which acts by catalyzing the cutting and rejoining of the recombining DNA molecules. The XerC-XerD complex is essential to convert dimers of the bacterial chromosome into monomers to permit their segregation at cell division. It also contributes to the segregational stability of plasmids. The chain is Tyrosine recombinase XerC from Pseudomonas aeruginosa (strain LESB58).